We begin with the raw amino-acid sequence, 219 residues long: Orotate phosphoribosyltransferase (219 aa).

A 5-phospho-alpha-D-ribose 1-diphosphate-binding site is contributed by lysine 26. 34 to 35 (FF) contributes to the orotate binding site. 5-phospho-alpha-D-ribose 1-diphosphate contacts are provided by residues 72-73 (YK), arginine 98, lysine 99, lysine 102, histidine 104, and 124-132 (DDVITAGTA). Orotate is bound by residues threonine 128 and arginine 156.

It belongs to the purine/pyrimidine phosphoribosyltransferase family. PyrE subfamily. Homodimer. It depends on Mg(2+) as a cofactor.

It carries out the reaction orotidine 5'-phosphate + diphosphate = orotate + 5-phospho-alpha-D-ribose 1-diphosphate. The protein operates within pyrimidine metabolism; UMP biosynthesis via de novo pathway; UMP from orotate: step 1/2. Its function is as follows. Catalyzes the transfer of a ribosyl phosphate group from 5-phosphoribose 1-diphosphate to orotate, leading to the formation of orotidine monophosphate (OMP). This is Orotate phosphoribosyltransferase from Stenotrophomonas maltophilia (strain R551-3).